Consider the following 392-residue polypeptide: DNA-directed RNA polymerase subunit Rpo1C (392 aa).

This sequence belongs to the RNA polymerase beta' chain family. In terms of assembly, part of the RNA polymerase complex.

It is found in the cytoplasm. It carries out the reaction RNA(n) + a ribonucleoside 5'-triphosphate = RNA(n+1) + diphosphate. In terms of biological role, DNA-dependent RNA polymerase (RNAP) catalyzes the transcription of DNA into RNA using the four ribonucleoside triphosphates as substrates. Forms part of the jaw domain. The protein is DNA-directed RNA polymerase subunit Rpo1C of Saccharolobus islandicus (strain Y.N.15.51 / Yellowstone #2) (Sulfolobus islandicus).